The primary structure comprises 779 residues: Phosphoribosylformylglycinamidine synthase subunit PurL (779 aa).

The active site involves His52. Residues Tyr55 and Lys94 each contribute to the ATP site. Glu96 contacts Mg(2+). Residues 97–100 (SHNH) and Arg119 each bind substrate. Residue His98 is the Proton acceptor of the active site. Asp120 provides a ligand contact to Mg(2+). Substrate is bound at residue Gln243. Asp271 provides a ligand contact to Mg(2+). 315–317 (ESQ) is a substrate binding site. Residues Asn523 and Gly560 each coordinate ATP. Mg(2+) is bound at residue Asn561. Residue Ser563 coordinates substrate.

This sequence belongs to the FGAMS family. As to quaternary structure, monomer. Part of the FGAM synthase complex composed of 1 PurL, 1 PurQ and 2 PurS subunits.

It localises to the cytoplasm. It carries out the reaction N(2)-formyl-N(1)-(5-phospho-beta-D-ribosyl)glycinamide + L-glutamine + ATP + H2O = 2-formamido-N(1)-(5-O-phospho-beta-D-ribosyl)acetamidine + L-glutamate + ADP + phosphate + H(+). It participates in purine metabolism; IMP biosynthesis via de novo pathway; 5-amino-1-(5-phospho-D-ribosyl)imidazole from N(2)-formyl-N(1)-(5-phospho-D-ribosyl)glycinamide: step 1/2. Part of the phosphoribosylformylglycinamidine synthase complex involved in the purines biosynthetic pathway. Catalyzes the ATP-dependent conversion of formylglycinamide ribonucleotide (FGAR) and glutamine to yield formylglycinamidine ribonucleotide (FGAM) and glutamate. The FGAM synthase complex is composed of three subunits. PurQ produces an ammonia molecule by converting glutamine to glutamate. PurL transfers the ammonia molecule to FGAR to form FGAM in an ATP-dependent manner. PurS interacts with PurQ and PurL and is thought to assist in the transfer of the ammonia molecule from PurQ to PurL. The protein is Phosphoribosylformylglycinamidine synthase subunit PurL of Prochlorococcus marinus (strain MIT 9312).